Here is a 417-residue protein sequence, read N- to C-terminus: Ribonucleoside-diphosphate reductase small chain (417 aa).

Fe cation is bound by residues Asp168, Glu199, and His202. Residue Tyr206 is part of the active site. Residues Glu261, Glu297, and His300 each coordinate Fe cation.

This sequence belongs to the ribonucleoside diphosphate reductase small chain family. Heterotetramer composed of a homodimer of the large subunit (R1) and a homodimer of the small subunit (R2). Larger multisubunit protein complex are also active, composed of (R1)n(R2)n. Requires Fe cation as cofactor.

The catalysed reaction is a 2'-deoxyribonucleoside 5'-diphosphate + [thioredoxin]-disulfide + H2O = a ribonucleoside 5'-diphosphate + [thioredoxin]-dithiol. Functionally, ribonucleoside-diphosphate reductase holoenzyme provides the precursors necessary for viral DNA synthesis. Allows virus growth in non-dividing cells. Catalyzes the biosynthesis of deoxyribonucleotides from the corresponding ribonucleotides. The chain is Ribonucleoside-diphosphate reductase small chain (RNR2) from Acanthamoeba polyphaga mimivirus (APMV).